Reading from the N-terminus, the 677-residue chain is UvrABC system protein B (677 aa).

The region spanning 25-412 (DGVNSGREYQ…SGAIIEQVIR (388 aa)) is the Helicase ATP-binding domain. 38 to 45 (GATGTGKT) lines the ATP pocket. The short motif at 91–114 (YYDYYQPEAYVPVSDTYIAKTSSI) is the Beta-hairpin element. One can recognise a Helicase C-terminal domain in the interval 429 to 591 (QVEDLLDEIR…IVPMPAGKKA (163 aa)). Residues 639–674 (PQLIDELETKMKKSAKDLDFENAAKLRDKIHQLRKK) form the UVR domain.

Belongs to the UvrB family. As to quaternary structure, forms a heterotetramer with UvrA during the search for lesions. Interacts with UvrC in an incision complex.

The protein localises to the cytoplasm. Its function is as follows. The UvrABC repair system catalyzes the recognition and processing of DNA lesions. A damage recognition complex composed of 2 UvrA and 2 UvrB subunits scans DNA for abnormalities. Upon binding of the UvrA(2)B(2) complex to a putative damaged site, the DNA wraps around one UvrB monomer. DNA wrap is dependent on ATP binding by UvrB and probably causes local melting of the DNA helix, facilitating insertion of UvrB beta-hairpin between the DNA strands. Then UvrB probes one DNA strand for the presence of a lesion. If a lesion is found the UvrA subunits dissociate and the UvrB-DNA preincision complex is formed. This complex is subsequently bound by UvrC and the second UvrB is released. If no lesion is found, the DNA wraps around the other UvrB subunit that will check the other stand for damage. This Prochlorococcus marinus (strain SARG / CCMP1375 / SS120) protein is UvrABC system protein B.